A 401-amino-acid polypeptide reads, in one-letter code: Insertion element ISM1 uncharacterized 48.3 kDa protein (401 aa).

Its function is as follows. This polypeptide is involved in transposition, and should therefore bind to nucleic acids. The chain is Insertion element ISM1 uncharacterized 48.3 kDa protein from Methanobrevibacter smithii.